The sequence spans 605 residues: Elongation factor 4 (605 aa).

Residues 4-186 form the tr-type G domain; sequence SSVRNFCIIA…AIVNKVPAPK (183 aa). Residues 16-21 and 133-136 contribute to the GTP site; these read DHGKST and NKID.

Belongs to the TRAFAC class translation factor GTPase superfamily. Classic translation factor GTPase family. LepA subfamily.

It localises to the cell membrane. The catalysed reaction is GTP + H2O = GDP + phosphate + H(+). Required for accurate and efficient protein synthesis under certain stress conditions. May act as a fidelity factor of the translation reaction, by catalyzing a one-codon backward translocation of tRNAs on improperly translocated ribosomes. Back-translocation proceeds from a post-translocation (POST) complex to a pre-translocation (PRE) complex, thus giving elongation factor G a second chance to translocate the tRNAs correctly. Binds to ribosomes in a GTP-dependent manner. The sequence is that of Elongation factor 4 from Dehalococcoides mccartyi (strain ATCC BAA-2100 / JCM 16839 / KCTC 5957 / BAV1).